Here is a 62-residue protein sequence, read N- to C-terminus: Beta-defensin 37 (62 aa).

The signal sequence occupies residues 1 to 16; the sequence is MKFSYFLLLLLSLSNF. 3 cysteine pairs are disulfide-bonded: cysteine 29–cysteine 58, cysteine 36–cysteine 51, and cysteine 41–cysteine 59.

Belongs to the beta-defensin family. As to expression, only expressed in epididymis (corpus and cauda).

The protein resides in the secreted. Has antibacterial activity. In Mus musculus (Mouse), this protein is Beta-defensin 37 (Defb37).